The sequence spans 163 residues: Cytochrome c-type biogenesis protein CcmE (163 aa).

Over 1-8 (MNPRRKKR) the chain is Cytoplasmic. The helical; Signal-anchor for type II membrane protein transmembrane segment at 9 to 29 (LTIILAISAGLAAVIGLVLYA) threads the bilayer. Residues 30–163 (LSQNIDLFYT…TEAQLKGAKQ (134 aa)) lie on the Periplasmic side of the membrane. Residues histidine 131 and tyrosine 135 each contribute to the heme site.

It belongs to the CcmE/CycJ family.

The protein resides in the cell inner membrane. Heme chaperone required for the biogenesis of c-type cytochromes. Transiently binds heme delivered by CcmC and transfers the heme to apo-cytochromes in a process facilitated by CcmF and CcmH. This chain is Cytochrome c-type biogenesis protein CcmE, found in Aeromonas salmonicida (strain A449).